We begin with the raw amino-acid sequence, 24 residues long: NLVSDIIGSKKHMEKLISIIKKCR.

Arg24 carries the arginine amide modification.

As to quaternary structure, homodimer; disulfide-linked. In terms of tissue distribution, expressed by the skin glands.

The protein localises to the secreted. Functionally, antimicrobial peptide. Active against Gram-negative bacteria E.coli ATCC 25922 (MIC=1.5 uM) and P.aeruginosa ATTC 27853 (MIC=23.2 uM) and against Gram-positive bacterium S.aureus ATCC 29313 (MIC=11.6 uM). Has no hemolytic activity. Associates with and disrupts membranes in vitro. In Phyllomedusa tarsius (Brownbelly leaf frog), this protein is Homotarsinin.